The chain runs to 197 residues: Scoloptoxin SSD20 (197 aa).

Residues 1–6 (PPMTTE) form the signal peptide.

In terms of tissue distribution, expressed by the venom gland.

It is found in the secreted. Functionally, may act as a voltage-gated potassium channel inhibitor. Is highly similar to the subunit beta of SSD14 which, when complexed with subunit alpha, induces platelet aggregation and hemolysis. The protein is Scoloptoxin SSD20 of Scolopendra dehaani (Thai centipede).